The following is a 309-amino-acid chain: Sulfate adenylyltransferase subunit 2 (309 aa).

This sequence belongs to the PAPS reductase family. CysD subfamily. As to quaternary structure, heterodimer composed of CysD, the smaller subunit, and CysN.

The catalysed reaction is sulfate + ATP + H(+) = adenosine 5'-phosphosulfate + diphosphate. It functions in the pathway sulfur metabolism; hydrogen sulfide biosynthesis; sulfite from sulfate: step 1/3. In terms of biological role, with CysN forms the ATP sulfurylase (ATPS) that catalyzes the adenylation of sulfate producing adenosine 5'-phosphosulfate (APS) and diphosphate, the first enzymatic step in sulfur assimilation pathway. APS synthesis involves the formation of a high-energy phosphoric-sulfuric acid anhydride bond driven by GTP hydrolysis by CysN coupled to ATP hydrolysis by CysD. The polypeptide is Sulfate adenylyltransferase subunit 2 (Mycobacterium sp. (strain JLS)).